A 214-amino-acid chain; its full sequence is Adenylate kinase (214 aa).

15–20 (GAGKGT) is a binding site for ATP. The interval 35–64 (ASGDLFREAIKNQSVIGRKIAAIISQGGYV) is NMP. AMP-binding positions include Ser36, Arg41, 62–64 (GYV), 90–93 (GYPR), and Gln97. An LID region spans residues 127–164 (NRVICNNCNSVYNLLFQKPLVENSCDQCSAKLVKRSDD). Residue Arg128 participates in ATP binding. Zn(2+)-binding residues include Cys131 and Cys134. 137–138 (VY) is an ATP binding site. Zn(2+) is bound by residues Cys151 and Cys154. Residues Arg161 and Arg172 each contribute to the AMP site. Residue Leu200 participates in ATP binding.

This sequence belongs to the adenylate kinase family. As to quaternary structure, monomer.

It is found in the cytoplasm. The enzyme catalyses AMP + ATP = 2 ADP. It participates in purine metabolism; AMP biosynthesis via salvage pathway; AMP from ADP: step 1/1. In terms of biological role, catalyzes the reversible transfer of the terminal phosphate group between ATP and AMP. Plays an important role in cellular energy homeostasis and in adenine nucleotide metabolism. The sequence is that of Adenylate kinase from Mycoplasma genitalium (strain ATCC 33530 / DSM 19775 / NCTC 10195 / G37) (Mycoplasmoides genitalium).